We begin with the raw amino-acid sequence, 325 residues long: Elongation factor P--(R)-beta-lysine ligase (325 aa).

76-78 (SPE) contacts substrate. ATP is bound by residues 100 to 102 (RNE) and Asn-109. Tyr-118 serves as a coordination point for substrate. Residue 244–245 (EL) coordinates ATP. Glu-251 lines the substrate pocket. Gly-300 contributes to the ATP binding site.

The protein belongs to the class-II aminoacyl-tRNA synthetase family. EpmA subfamily. As to quaternary structure, homodimer.

It carries out the reaction D-beta-lysine + L-lysyl-[protein] + ATP = N(6)-((3R)-3,6-diaminohexanoyl)-L-lysyl-[protein] + AMP + diphosphate + H(+). With EpmB is involved in the beta-lysylation step of the post-translational modification of translation elongation factor P (EF-P) on 'Lys-34'. Catalyzes the ATP-dependent activation of (R)-beta-lysine produced by EpmB, forming a lysyl-adenylate, from which the beta-lysyl moiety is then transferred to the epsilon-amino group of EF-P 'Lys-34'. This Escherichia coli O139:H28 (strain E24377A / ETEC) protein is Elongation factor P--(R)-beta-lysine ligase.